The following is a 464-amino-acid chain: Arginine biosynthesis bifunctional protein ArgJ, mitochondrial (464 aa).

Residues 1–22 (MAASFKALPQQLTLTRSFARCY) constitute a mitochondrion transit peptide. Positions 193, 222, 233, 320, 459, and 464 each coordinate substrate. The active-site Nucleophile is the Thr-233.

The protein belongs to the ArgJ family. As to quaternary structure, heterodimer of an alpha and a beta chain. Post-translationally, the alpha and beta chains are autoproteolytically processed from a single precursor protein within the mitochondrion.

It localises to the mitochondrion matrix. It carries out the reaction N(2)-acetyl-L-ornithine + L-glutamate = N-acetyl-L-glutamate + L-ornithine. It catalyses the reaction L-glutamate + acetyl-CoA = N-acetyl-L-glutamate + CoA + H(+). The protein operates within amino-acid biosynthesis; L-arginine biosynthesis; L-ornithine and N-acetyl-L-glutamate from L-glutamate and N(2)-acetyl-L-ornithine (cyclic): step 1/1. It functions in the pathway amino-acid biosynthesis; L-arginine biosynthesis; N(2)-acetyl-L-ornithine from L-glutamate: step 1/4. In terms of biological role, catalyzes two activities which are involved in the cyclic version of arginine biosynthesis: the synthesis of acetylglutamate from glutamate and acetyl-CoA, and of ornithine by transacetylation between acetylornithine and glutamate. This Verticillium alfalfae (strain VaMs.102 / ATCC MYA-4576 / FGSC 10136) (Verticillium wilt of alfalfa) protein is Arginine biosynthesis bifunctional protein ArgJ, mitochondrial.